The primary structure comprises 494 residues: UPF0371 protein SEQ_1471 (494 aa).

This sequence belongs to the UPF0371 family.

The chain is UPF0371 protein SEQ_1471 from Streptococcus equi subsp. equi (strain 4047).